The following is a 611-amino-acid chain: Dihydroxy-acid dehydratase (611 aa).

Asp-81 provides a ligand contact to Mg(2+). Position 122 (Cys-122) interacts with [2Fe-2S] cluster. Residues Asp-123 and Lys-124 each contribute to the Mg(2+) site. Lys-124 carries the post-translational modification N6-carboxylysine. [2Fe-2S] cluster is bound at residue Cys-195. Mg(2+) is bound at residue Glu-491. Ser-517 (proton acceptor) is an active-site residue.

It belongs to the IlvD/Edd family. In terms of assembly, homodimer. [2Fe-2S] cluster is required as a cofactor. Mg(2+) serves as cofactor.

It catalyses the reaction (2R)-2,3-dihydroxy-3-methylbutanoate = 3-methyl-2-oxobutanoate + H2O. It carries out the reaction (2R,3R)-2,3-dihydroxy-3-methylpentanoate = (S)-3-methyl-2-oxopentanoate + H2O. The protein operates within amino-acid biosynthesis; L-isoleucine biosynthesis; L-isoleucine from 2-oxobutanoate: step 3/4. It functions in the pathway amino-acid biosynthesis; L-valine biosynthesis; L-valine from pyruvate: step 3/4. Functions in the biosynthesis of branched-chain amino acids. Catalyzes the dehydration of (2R,3R)-2,3-dihydroxy-3-methylpentanoate (2,3-dihydroxy-3-methylvalerate) into 2-oxo-3-methylpentanoate (2-oxo-3-methylvalerate) and of (2R)-2,3-dihydroxy-3-methylbutanoate (2,3-dihydroxyisovalerate) into 2-oxo-3-methylbutanoate (2-oxoisovalerate), the penultimate precursor to L-isoleucine and L-valine, respectively. In Agrobacterium fabrum (strain C58 / ATCC 33970) (Agrobacterium tumefaciens (strain C58)), this protein is Dihydroxy-acid dehydratase.